Here is a 543-residue protein sequence, read N- to C-terminus: Chaperonin GroEL 7 (543 aa).

ATP contacts are provided by residues 30–33 (TLGP), lysine 51, 87–91 (DGTTT), glycine 415, and aspartate 496.

It belongs to the chaperonin (HSP60) family. As to quaternary structure, forms a cylinder of 14 subunits composed of two heptameric rings stacked back-to-back. Interacts with the co-chaperonin GroES.

It is found in the cytoplasm. It catalyses the reaction ATP + H2O + a folded polypeptide = ADP + phosphate + an unfolded polypeptide.. Functionally, together with its co-chaperonin GroES, plays an essential role in assisting protein folding. The GroEL-GroES system forms a nano-cage that allows encapsulation of the non-native substrate proteins and provides a physical environment optimized to promote and accelerate protein folding. In Bradyrhizobium diazoefficiens (strain JCM 10833 / BCRC 13528 / IAM 13628 / NBRC 14792 / USDA 110), this protein is Chaperonin GroEL 7.